We begin with the raw amino-acid sequence, 432 residues long: Tol-Pal system protein TolB (432 aa).

A signal peptide spans 1 to 24 (MKLVTRMWSILIVFFLAVLQPAQA).

This sequence belongs to the TolB family. The Tol-Pal system is composed of five core proteins: the inner membrane proteins TolA, TolQ and TolR, the periplasmic protein TolB and the outer membrane protein Pal. They form a network linking the inner and outer membranes and the peptidoglycan layer.

The protein resides in the periplasm. Functionally, part of the Tol-Pal system, which plays a role in outer membrane invagination during cell division and is important for maintaining outer membrane integrity. This is Tol-Pal system protein TolB from Pasteurella multocida (strain Pm70).